The chain runs to 498 residues: ATP synthase subunit beta, chloroplastic (498 aa).

Residue 172–179 (GGAGVGKT) coordinates ATP.

The protein belongs to the ATPase alpha/beta chains family. F-type ATPases have 2 components, CF(1) - the catalytic core - and CF(0) - the membrane proton channel. CF(1) has five subunits: alpha(3), beta(3), gamma(1), delta(1), epsilon(1). CF(0) has four main subunits: a(1), b(1), b'(1) and c(9-12).

Its subcellular location is the plastid. The protein localises to the chloroplast thylakoid membrane. The catalysed reaction is ATP + H2O + 4 H(+)(in) = ADP + phosphate + 5 H(+)(out). Its function is as follows. Produces ATP from ADP in the presence of a proton gradient across the membrane. The catalytic sites are hosted primarily by the beta subunits. This chain is ATP synthase subunit beta, chloroplastic, found in Hyophorbe lagenicaulis (Bottle palm).